The primary structure comprises 229 residues: Small ribosomal subunit protein uS3 (229 aa).

One can recognise a KH type-2 domain in the interval 38-106; sequence IREYIENKLF…KVHINVMEVK (69 aa). Residues 208–217 show a composition bias toward acidic residues; it reads PEVDENEETK. Residues 208-229 are disordered; the sequence is PEVDENEETKEENKEKSEEKSE. Residues 218 to 229 show a composition bias toward basic and acidic residues; sequence EENKEKSEEKSE.

Belongs to the universal ribosomal protein uS3 family. As to quaternary structure, part of the 30S ribosomal subunit. Forms a tight complex with proteins S10 and S14.

In terms of biological role, binds the lower part of the 30S subunit head. Binds mRNA in the 70S ribosome, positioning it for translation. This is Small ribosomal subunit protein uS3 from Natranaerobius thermophilus (strain ATCC BAA-1301 / DSM 18059 / JW/NM-WN-LF).